The chain runs to 309 residues: Ornithine carbamoyltransferase (309 aa).

Residues 56 to 59 (STRT), Gln-83, Arg-107, and 134 to 137 (HPCQ) each bind carbamoyl phosphate. Residues Asn-165, Asp-223, and 227-228 (SM) contribute to the L-ornithine site. Carbamoyl phosphate is bound by residues 263-264 (CL) and Arg-291.

The protein belongs to the aspartate/ornithine carbamoyltransferase superfamily. OTCase family.

The protein resides in the cytoplasm. It catalyses the reaction carbamoyl phosphate + L-ornithine = L-citrulline + phosphate + H(+). It functions in the pathway amino-acid biosynthesis; L-arginine biosynthesis; L-arginine from L-ornithine and carbamoyl phosphate: step 1/3. Its function is as follows. Reversibly catalyzes the transfer of the carbamoyl group from carbamoyl phosphate (CP) to the N(epsilon) atom of ornithine (ORN) to produce L-citrulline. The polypeptide is Ornithine carbamoyltransferase (Burkholderia lata (strain ATCC 17760 / DSM 23089 / LMG 22485 / NCIMB 9086 / R18194 / 383)).